An 89-amino-acid chain; its full sequence is Probable Fe(2+)-trafficking protein (89 aa).

The protein belongs to the Fe(2+)-trafficking protein family.

Could be a mediator in iron transactions between iron acquisition and iron-requiring processes, such as synthesis and/or repair of Fe-S clusters in biosynthetic enzymes. The chain is Probable Fe(2+)-trafficking protein from Stenotrophomonas maltophilia (strain R551-3).